The sequence spans 214 residues: N-(5'-phosphoribosyl)anthranilate isomerase (214 aa).

Belongs to the TrpF family.

The catalysed reaction is N-(5-phospho-beta-D-ribosyl)anthranilate = 1-(2-carboxyphenylamino)-1-deoxy-D-ribulose 5-phosphate. Its pathway is amino-acid biosynthesis; L-tryptophan biosynthesis; L-tryptophan from chorismate: step 3/5. The chain is N-(5'-phosphoribosyl)anthranilate isomerase from Halorubrum lacusprofundi (strain ATCC 49239 / DSM 5036 / JCM 8891 / ACAM 34).